Reading from the N-terminus, the 342-residue chain is 4-hydroxy-2-oxovalerate aldolase (342 aa).

A Pyruvate carboxyltransferase domain is found at 7–259; that stretch reads ILVHDMSLRD…CTGVDLGRIQ (253 aa). 15–16 is a binding site for substrate; that stretch reads RD. D16 provides a ligand contact to Mn(2+). H19 (proton acceptor) is an active-site residue. Substrate is bound by residues S169 and H198. Mn(2+) contacts are provided by H198 and H200. Y289 provides a ligand contact to substrate.

This sequence belongs to the 4-hydroxy-2-oxovalerate aldolase family.

It carries out the reaction (S)-4-hydroxy-2-oxopentanoate = acetaldehyde + pyruvate. This Alkalilimnicola ehrlichii (strain ATCC BAA-1101 / DSM 17681 / MLHE-1) protein is 4-hydroxy-2-oxovalerate aldolase.